The chain runs to 292 residues: Claudin-23 (292 aa).

The Cytoplasmic portion of the chain corresponds to 1-3 (MRT). A helical transmembrane segment spans residues 4–24 (PVVMTLGMVLAPCGLLLNLTG). Topologically, residues 25 to 81 (TLAPGWRLVKGFLNQPVDVELYQGLWDMCREQSSRERECGQTDQWGYFEAQPVLVAR) are extracellular. The helical transmembrane segment at 82-102 (ALMVTSLAATVLGLLLASLGV) threads the bilayer. Over 103 to 110 (RCWQDEPN) the chain is Cytoplasmic. The chain crosses the membrane as a helical span at residues 111–131 (FVLAGLSGVVLFVAGLLGLIP). Over 132–160 (VSWYNHFLGDRDVLPAPASPVTVQVSYSL) the chain is Extracellular. A helical membrane pass occupies residues 161–181 (VLGYLGSCLLLLGGFSLALSF). The Cytoplasmic portion of the chain corresponds to 182-292 (APWCDERCRR…DSSLPCDSDL (111 aa)). The segment at 222–292 (KYYSDGQHRP…DSSLPCDSDL (71 aa)) is disordered. Residues 273–282 (DAPSCSTHPC) are compositionally biased toward polar residues.

The protein belongs to the claudin family. In terms of tissue distribution, expressed in germinal center B-cells, placenta, stomach as well as in colon tumor.

It localises to the cell junction. The protein resides in the tight junction. It is found in the cell membrane. Functionally, plays a major role in tight junction-specific obliteration of the intercellular space, through calcium-independent cell-adhesion activity. This chain is Claudin-23 (CLDN23), found in Homo sapiens (Human).